A 436-amino-acid polypeptide reads, in one-letter code: Adenylosuccinate synthetase (436 aa).

Residues glycine 22–lysine 28 and glycine 50–glutamate 52 each bind GTP. The active-site Proton acceptor is aspartate 23. Residues aspartate 23 and glycine 50 each contribute to the Mg(2+) site. Residues aspartate 23–lysine 26, asparagine 48–histidine 51, threonine 141, arginine 155, asparagine 231, threonine 246, and arginine 310 contribute to the IMP site. Catalysis depends on histidine 51, which acts as the Proton donor. Substrate is bound at residue valine 306–arginine 312. GTP contacts are provided by residues arginine 312, lysine 338–aspartate 340, and glycine 424–glycine 426.

It belongs to the adenylosuccinate synthetase family. As to quaternary structure, homodimer. Mg(2+) serves as cofactor.

The protein localises to the cytoplasm. The enzyme catalyses IMP + L-aspartate + GTP = N(6)-(1,2-dicarboxyethyl)-AMP + GDP + phosphate + 2 H(+). The protein operates within purine metabolism; AMP biosynthesis via de novo pathway; AMP from IMP: step 1/2. In terms of biological role, plays an important role in the salvage pathway for purine nucleotide biosynthesis. Catalyzes the first committed step in the biosynthesis of AMP from IMP. The protein is Adenylosuccinate synthetase of Babesia bovis.